The sequence spans 390 residues: Exodeoxyribonuclease 7 large subunit (390 aa).

This sequence belongs to the XseA family. Heterooligomer composed of large and small subunits.

It is found in the cytoplasm. The enzyme catalyses Exonucleolytic cleavage in either 5'- to 3'- or 3'- to 5'-direction to yield nucleoside 5'-phosphates.. Bidirectionally degrades single-stranded DNA into large acid-insoluble oligonucleotides, which are then degraded further into small acid-soluble oligonucleotides. The chain is Exodeoxyribonuclease 7 large subunit from Synechococcus sp. (strain CC9311).